Reading from the N-terminus, the 1497-residue chain is Dual oxidase 1 (1497 aa).

A signal peptide spans 1–21 (MRSKHVLYIAILFSSIFGGKG). Residues 22 to 587 (IQQNEEFQRY…MQSTYWTDND (566 aa)) are Extracellular-facing. A peroxidase-like; mediates peroxidase activity region spans residues 26 to 590 (EEFQRYDGWY…TYWTDNDTTY (565 aa)). N-linked (GlcNAc...) asparagine glycosylation is found at N66, N305, N567, and N586. Residues 588–608 (TTYVFTLIGLACVPLICYGIG) form a helical membrane-spanning segment. The Cytoplasmic portion of the chain corresponds to 609-986 (RYLVNRRIAI…VSAFLETYRQ (378 aa)). 2 consecutive EF-hand domains span residues 817 to 852 (ANNE…FVNA) and 853 to 888 (PQKQ…LNQT). A helical transmembrane segment spans residues 987–1007 (HVFIVFCFVAINLVLFFERFW). At 1008-1024 (HYRYMAENRDLRRVMGA) the chain is on the extracellular side. Residues 1025 to 1045 (GIAITRGAAGALSFCMALILL) traverse the membrane as a helical segment. A Ferric oxidoreductase domain is found at 1030-1210 (RGAAGALSFC…FVIDRIIGLM (181 aa)). Topologically, residues 1046 to 1068 (TVCRNIITLLRETVIAQYIPFDS) are cytoplasmic. A helical membrane pass occupies residues 1069 to 1089 (AIAFHKIVALFAAFWATLHTV). At 1090-1134 (GHCVNFYHVGTQSQEGLACLFQEAFFGSNFLPSISYWFFSTITGL) the chain is on the extracellular side. Residues 1135-1155 (TGIALVAVMCIIYVFALPCFI) traverse the membrane as a helical segment. At 1156 to 1163 (KRAYHAFR) the chain is on the cytoplasmic side. The helical transmembrane segment at 1164–1184 (LTHLLNIAFYALTLLHGLPKL) threads the bilayer. Residues 1185 to 1189 (LDSPK) are Extracellular-facing. A helical transmembrane segment spans residues 1190–1210 (FGYYVVGPIVLFVIDRIIGLM). The FAD-binding FR-type domain occupies 1211 to 1318 (QYYKKLEIVN…KGPYGDGNQE (108 aa)). At 1211 to 1497 (QYYKKLEIVN…PSFAHRFETF (287 aa)) the chain is on the cytoplasmic side.

The protein in the N-terminal section; belongs to the peroxidase family. As to quaternary structure, interacts with doxa-1 and tsp-15. Interacts with rho-1. As to expression, expressed in hypodermal cells.

Its subcellular location is the membrane. The catalysed reaction is NADH + O2 + H(+) = H2O2 + NAD(+). It catalyses the reaction NADPH + O2 + H(+) = H2O2 + NADP(+). Its activity is regulated as follows. Peroxidase activity is inhibited by aminobenzohydrazide. Its function is as follows. Plays a role in cuticle biogenesis. In complex with doxa-1 and tsp-15, produces reactive oxygen species (ROS), which are probably used by mlt-7 for tyrosine cross-linking, thus stabilizing cuticular extracellular matrix. May regulate the production of ROS by playing a role in modulating proline catabolism. Required in combination with mlt-7 for correct formation of cross-links in cuticle collagens. Association with the GTPase rho-1 promotes ROS production and this interaction may be modulated by memo-1, in order to control the oxidative stress response and longevity. This Caenorhabditis elegans protein is Dual oxidase 1.